Here is a 143-residue protein sequence, read N- to C-terminus: Small ribosomal subunit protein eS19x (143 aa).

The protein belongs to the eukaryotic ribosomal protein eS19 family.

This Arabidopsis thaliana (Mouse-ear cress) protein is Small ribosomal subunit protein eS19x (RPS19C).